Consider the following 208-residue polypeptide: Protein-L-isoaspartate O-methyltransferase (208 aa).

The active site involves serine 59.

Belongs to the methyltransferase superfamily. L-isoaspartyl/D-aspartyl protein methyltransferase family. As to quaternary structure, monomer.

The protein localises to the cytoplasm. The catalysed reaction is [protein]-L-isoaspartate + S-adenosyl-L-methionine = [protein]-L-isoaspartate alpha-methyl ester + S-adenosyl-L-homocysteine. Catalyzes the methyl esterification of L-isoaspartyl residues in peptides and proteins that result from spontaneous decomposition of normal L-aspartyl and L-asparaginyl residues. It plays a role in the repair and/or degradation of damaged proteins. In Shigella flexneri, this protein is Protein-L-isoaspartate O-methyltransferase (pcm).